A 339-amino-acid chain; its full sequence is Peroxidase 29 (339 aa).

An N-terminal signal peptide occupies residues 1–28 (MKPKSKVAESTAASCFLVMSLLCSCIIG). Intrachain disulfides connect C47–C127, C80–C85, C133–C335, and C213–C242. H78 acts as the Proton acceptor in catalysis. Residues D79, V82, G84, D86, and S88 each coordinate Ca(2+). Residue P176 participates in substrate binding. Position 206 (H206) interacts with heme b. Position 207 (T207) interacts with Ca(2+). A glycan (N-linked (GlcNAc...) asparagine) is linked at N224. Residues D260, T262, and D267 each coordinate Ca(2+).

Belongs to the peroxidase family. Classical plant (class III) peroxidase subfamily. It depends on heme b as a cofactor. The cofactor is Ca(2+).

The protein resides in the secreted. The enzyme catalyses 2 a phenolic donor + H2O2 = 2 a phenolic radical donor + 2 H2O. Functionally, removal of H(2)O(2), oxidation of toxic reductants, biosynthesis and degradation of lignin, suberization, auxin catabolism, response to environmental stresses such as wounding, pathogen attack and oxidative stress. These functions might be dependent on each isozyme/isoform in each plant tissue. The sequence is that of Peroxidase 29 (PER29) from Arabidopsis thaliana (Mouse-ear cress).